The sequence spans 98 residues: Large ribosomal subunit protein uL23 (98 aa).

It belongs to the universal ribosomal protein uL23 family. In terms of assembly, part of the 50S ribosomal subunit. Contacts protein L29, and trigger factor when it is bound to the ribosome.

One of the early assembly proteins it binds 23S rRNA. One of the proteins that surrounds the polypeptide exit tunnel on the outside of the ribosome. Forms the main docking site for trigger factor binding to the ribosome. In Caulobacter sp. (strain K31), this protein is Large ribosomal subunit protein uL23.